The chain runs to 362 residues: Fructose-bisphosphate aldolase (362 aa).

D-glyceraldehyde 3-phosphate is bound at residue Ser63. Asp112 (proton donor) is an active-site residue. His113, Asp147, Glu177, and His229 together coordinate Zn(2+). Gly230 lines the dihydroxyacetone phosphate pocket. His268 serves as a coordination point for Zn(2+). Residues 269 to 271 (GGS) and 290 to 293 (NVDT) each bind dihydroxyacetone phosphate.

Belongs to the class II fructose-bisphosphate aldolase family. Homodimer. It depends on Zn(2+) as a cofactor.

The enzyme catalyses beta-D-fructose 1,6-bisphosphate = D-glyceraldehyde 3-phosphate + dihydroxyacetone phosphate. Its pathway is carbohydrate degradation; glycolysis; D-glyceraldehyde 3-phosphate and glycerone phosphate from D-glucose: step 4/4. In terms of biological role, catalyzes the aldol condensation of dihydroxyacetone phosphate (DHAP or glycerone-phosphate) with glyceraldehyde 3-phosphate (G3P) to form fructose 1,6-bisphosphate (FBP) in gluconeogenesis and the reverse reaction in glycolysis. The polypeptide is Fructose-bisphosphate aldolase (fba) (Neurospora crassa (strain ATCC 24698 / 74-OR23-1A / CBS 708.71 / DSM 1257 / FGSC 987)).